Here is a 347-residue protein sequence, read N- to C-terminus: Ryncolin-2 (347 aa).

An N-terminal signal peptide occupies residues 1 to 19 (MKPWAAFHLIFLVASSLEG). The disordered stretch occupies residues 49-115 (LQSQPGIPGI…DKGDKGDKGD (67 aa)). A Collagen-like domain is found at 57 to 114 (GIPGVPGINGSEGLKGDPGPQGLPGETGFDGIPGVAGPKGDKGDQGDKGDKGDKGDKG). A compositionally biased stretch (basic and acidic residues) spans 95–115 (KGDKGDQGDKGDKGDKGDKGD). The Fibrinogen C-terminal domain maps to 121–341 (DCPPTDVEVR…YADMKIRPQQ (221 aa)). 2 cysteine pairs are disulfide-bonded: cysteine 132–cysteine 160 and cysteine 284–cysteine 297.

This sequence belongs to the ficolin lectin family. Veficolin subfamily. In terms of processing, hydroxylated, possibly at Pro-74 and Pro-94. In terms of tissue distribution, expressed by the venom duct.

It is found in the secreted. Functionally, initiates complement activation and/or interferes in platelet aggregation and/or blood coagulation. This is Ryncolin-2 from Cerberus rynchops (Dog-faced water snake).